Consider the following 175-residue polypeptide: Acireductone dioxygenase (175 aa).

Fe(2+) contacts are provided by histidine 81, histidine 83, glutamate 87, and histidine 126. 4 residues coordinate Ni(2+): histidine 81, histidine 83, glutamate 87, and histidine 126.

Belongs to the acireductone dioxygenase (ARD) family. Fe(2+) is required as a cofactor. It depends on Ni(2+) as a cofactor.

It localises to the cytoplasm. The protein localises to the nucleus. It carries out the reaction 1,2-dihydroxy-5-(methylsulfanyl)pent-1-en-3-one + O2 = 4-methylsulfanyl-2-oxobutanoate + formate + 2 H(+). The enzyme catalyses 1,2-dihydroxy-5-(methylsulfanyl)pent-1-en-3-one + O2 = 3-(methylsulfanyl)propanoate + CO + formate + 2 H(+). Its pathway is amino-acid biosynthesis; L-methionine biosynthesis via salvage pathway; L-methionine from S-methyl-5-thio-alpha-D-ribose 1-phosphate: step 5/6. Its function is as follows. Catalyzes 2 different reactions between oxygen and the acireductone 1,2-dihydroxy-3-keto-5-methylthiopentene (DHK-MTPene) depending upon the metal bound in the active site. Fe-containing acireductone dioxygenase (Fe-ARD) produces formate and 2-keto-4-methylthiobutyrate (KMTB), the alpha-ketoacid precursor of methionine in the methionine recycle pathway. Ni-containing acireductone dioxygenase (Ni-ARD) produces methylthiopropionate, carbon monoxide and formate, and does not lie on the methionine recycle pathway. In Phaeosphaeria nodorum (strain SN15 / ATCC MYA-4574 / FGSC 10173) (Glume blotch fungus), this protein is Acireductone dioxygenase.